We begin with the raw amino-acid sequence, 323 residues long: Pectate lyase A (323 aa).

A signal peptide spans 1-31; it reads MTNFKWIVAAAGLLFGQVLAAPTATSTHAKR. The N-linked (GlcNAc...) asparagine glycan is linked to N95. Residues D136, D165, and D169 each coordinate Ca(2+). The active site involves R222.

This sequence belongs to the polysaccharide lyase 1 family. The cofactor is Ca(2+).

The protein localises to the secreted. It catalyses the reaction Eliminative cleavage of (1-&gt;4)-alpha-D-galacturonan to give oligosaccharides with 4-deoxy-alpha-D-galact-4-enuronosyl groups at their non-reducing ends.. Pectinolytic enzyme consist of four classes of enzymes: pectin lyase, polygalacturonase, pectin methylesterase and rhamnogalacturonase. Among pectinolytic enzymes, pectin lyase is the most important in depolymerization of pectin, since it cleaves internal glycosidic bonds of highly methylated pectins. Favors pectate, the anion, over pectin, the methyl ester. The polypeptide is Pectate lyase A (plyA) (Aspergillus niger).